Here is a 145-residue protein sequence, read N- to C-terminus: uncharacterized protein (145 aa).

This sequence belongs to the SAP18 family.

Its subcellular location is the cytoplasm. It localises to the nucleus. This is an uncharacterized protein from Schizosaccharomyces pombe (strain 972 / ATCC 24843) (Fission yeast).